We begin with the raw amino-acid sequence, 982 residues long: E3 ubiquitin-protein ligase CBL-B (982 aa).

Residues 1 to 14 (MASSSSSSSSTNSS) show a composition bias toward low complexity. The segment at 1–25 (MASSSSSSSSTNSSAVTGRLPGARS) is disordered. The tract at residues 46–178 (PPKQAAADRR…KAIFPSGQFQ (133 aa)) is 4H. Positions 46–354 (PPKQAAADRR…GRSYNPDLTD (309 aa)) constitute a Cbl-PTB domain. The EF-hand-like stretch occupies residues 179–251 (GDNFRITKAD…FEFDIFTRLF (73 aa)). Residues aspartate 232, threonine 234, asparagine 236, tyrosine 238, and glutamate 243 each contribute to the Ca(2+) site. The SH2-like stretch occupies residues 252–354 (QPWTSILRNW…GRSYNPDLTD (103 aa)). 4-O-phospho-L-tyrosine is bound at residue arginine 297. The linker stretch occupies residues 355 to 383 (LCEPTPHDHIKVTQEQYELYCEMGSTFQL). Residues 384 to 423 (CKICAENDKDVKIEPCGHLMCTSCLTSWQESDGQGCPFCR) form an RING-type zinc finger. 3 disordered regions span residues 480–582 (MNER…RTCR), 709–728 (VRNSAEEDDSEYKIPSSHPV), and 766–911 (LKQP…PVPR). Positions 483–497 (RQNSPVTSPGSSPLS) are enriched in polar residues. The segment covering 554 to 576 (LPAPPPPLREPPPPPERPPPIPP) has biased composition (pro residues). The span at 825–834 (PSQPPPPPPA) shows a compositional bias: pro residues. The region spanning 927–970 (SLAENVDAKIAKLMGEGFPFEEVKRALEIAQNNVDVARSILREF) is the UBA domain.

In terms of assembly, interacts with several SH3 domain-containing proteins and with poly-ubiquitinated proteins.

The protein localises to the cytoplasm. It catalyses the reaction S-ubiquitinyl-[E2 ubiquitin-conjugating enzyme]-L-cysteine + [acceptor protein]-L-lysine = [E2 ubiquitin-conjugating enzyme]-L-cysteine + N(6)-ubiquitinyl-[acceptor protein]-L-lysine.. The protein operates within protein modification; protein ubiquitination. Its function is as follows. E3 ubiquitin-protein ligase which accepts ubiquitin from specific E2 ubiquitin-conjugating enzymes, and transfers it to substrates, generally promoting their degradation by the proteasome. This is E3 ubiquitin-protein ligase CBL-B (cblb) from Xenopus tropicalis (Western clawed frog).